A 273-amino-acid polypeptide reads, in one-letter code: uncharacterized protein (273 aa).

The protein belongs to the ycf23 family.

It is found in the plastid. The protein localises to the chloroplast. This is an uncharacterized protein from Pyropia yezoensis (Susabi-nori).